Here is a 219-residue protein sequence, read N- to C-terminus: Large ribosomal subunit protein uL3 (219 aa).

The disordered stretch occupies residues 134–153 (RASHGNSRSHNVPGSIGMAQ). N5-methylglutamine is present on glutamine 153.

It belongs to the universal ribosomal protein uL3 family. In terms of assembly, part of the 50S ribosomal subunit. Forms a cluster with proteins L14 and L19. Methylated by PrmB.

Its function is as follows. One of the primary rRNA binding proteins, it binds directly near the 3'-end of the 23S rRNA, where it nucleates assembly of the 50S subunit. The protein is Large ribosomal subunit protein uL3 of Paraburkholderia phytofirmans (strain DSM 17436 / LMG 22146 / PsJN) (Burkholderia phytofirmans).